The sequence spans 829 residues: Cadherin-3 (829 aa).

A signal peptide spans 1–24 (MGLPRGPLASLLLLQVCWLQCAAS). Residues 25 to 107 (EPCRAVFREA…SKRILRRHKR (83 aa)) constitute a propeptide that is removed on maturation. Cadherin domains are found at residues 108-215 (DWVV…KPKF), 216-328 (TQDT…APMF), 329-440 (DPQK…APVF), 441-546 (VPPS…DHGP), and 547-650 (VPEP…CPGP). The Extracellular portion of the chain corresponds to 108–654 (DWVVAPISVP…ETCPGPWKGG (547 aa)). Asn-200 carries an N-linked (GlcNAc...) asparagine glycan. The N-linked (GlcNAc...) asparagine glycan is linked to Asn-566. The chain crosses the membrane as a helical span at residues 655–677 (FILPVLGAVLALLFLLLVLLLLV). The Cytoplasmic segment spans residues 678–829 (RKKRKIKEPL…ADMYGGGEDD (152 aa)).

Interacts with CDCP1 and CTNNB1. In terms of tissue distribution, expressed in some normal epithelial tissues and in some carcinoma cell lines.

The protein localises to the cell membrane. Cadherins are calcium-dependent cell adhesion proteins. They preferentially interact with themselves in a homophilic manner in connecting cells; cadherins may thus contribute to the sorting of heterogeneous cell types. The protein is Cadherin-3 (CDH3) of Homo sapiens (Human).